The sequence spans 906 residues: Protein translocase subunit SecA (906 aa).

ATP-binding positions include Q86, 104–108 (GEGKT), and D499. A disordered region spans residues 863–885 (PVVSRIDPKDRNPDDPTSWGRVS). Zn(2+) contacts are provided by C890, C892, C901, and H902.

Belongs to the SecA family. As to quaternary structure, monomer and homodimer. Part of the essential Sec protein translocation apparatus which comprises SecA, SecYEG and auxiliary proteins SecDF-YajC and YidC. The cofactor is Zn(2+).

Its subcellular location is the cell inner membrane. It localises to the cytoplasm. It catalyses the reaction ATP + H2O + cellular proteinSide 1 = ADP + phosphate + cellular proteinSide 2.. In terms of biological role, part of the Sec protein translocase complex. Interacts with the SecYEG preprotein conducting channel. Has a central role in coupling the hydrolysis of ATP to the transfer of proteins into and across the cell membrane, serving both as a receptor for the preprotein-SecB complex and as an ATP-driven molecular motor driving the stepwise translocation of polypeptide chains across the membrane. This is Protein translocase subunit SecA from Rickettsia akari (strain Hartford).